A 267-amino-acid chain; its full sequence is DNA repair protein RecO (267 aa).

The protein belongs to the RecO family.

Functionally, involved in DNA repair and RecF pathway recombination. The sequence is that of DNA repair protein RecO from Prochlorococcus marinus (strain MIT 9313).